Reading from the N-terminus, the 339-residue chain is Heat stress transcription factor C-1a (339 aa).

Positions 154-217 (EEEDAAEDVL…LAKLADDPNA (64 aa)) form a coiled coil. The interval 176 to 212 (LRHEQTAIGEELARMSQRLQATERRPDQLMSFLAKLA) is hydrophobic repeat HR-A/B. Residues 227-248 (AERKRRRQHLPSHEPTVCPLPP) are disordered. The short motif at 229–233 (RKRRR) is the Nuclear localization signal element.

Belongs to the HSF family. Class C subfamily. In terms of assembly, homotrimer. Post-translationally, exhibits temperature-dependent phosphorylation.

It localises to the nucleus. Functionally, transcriptional regulator that specifically binds DNA of heat shock promoter elements (HSE). This Oryza sativa subsp. japonica (Rice) protein is Heat stress transcription factor C-1a (HSFC1A).